A 45-amino-acid polypeptide reads, in one-letter code: Large ribosomal subunit protein bL34 (45 aa).

Positions 1-45 (MTKRTFGGTSRKRKRVSGFRVRMRSHTGRRVIKSRRKRGRDRIAV) are disordered. Over residues 10–45 (SRKRKRVSGFRVRMRSHTGRRVIKSRRKRGRDRIAV) the composition is skewed to basic residues.

The protein belongs to the bacterial ribosomal protein bL34 family.

The chain is Large ribosomal subunit protein bL34 from Prochlorococcus marinus (strain MIT 9515).